Consider the following 342-residue polypeptide: MKFIDEAKIYVKAGDGGRGCVSFRREKYVPFGGPNGGDGGKGGDVVIVATSSHNTLLDLKYKQHHVAKHGGHGEGSNRTGRSAPDLTIPVPVGTLVMDSESGEILADLVTEGQEYIVAHGGIGGRGNARFATATNQAPRYAQSGIPGEERWIRLELKLLADVGIIGLPNVGKSTFISRVSAARPKIADYPFTTLTPHLGVVRYGDDLNTFVLADIPGLIEGAHEGVGMGIQFLRHIERTALLLHIIDISRDETSTGWHDFEVINSELASYSPELILKPQIVAVNKTDLPITREKLKDTLRIFAEKGIVLYPFSAATGEGIPALLYKIGEALKNIRYRQTEHE.

Residues 1 to 159 enclose the Obg domain; that stretch reads MKFIDEAKIY…RWIRLELKLL (159 aa). The OBG-type G domain occupies 160–332; that stretch reads ADVGIIGLPN…LLYKIGEALK (173 aa). GTP is bound by residues 166 to 173, 191 to 195, 214 to 217, 284 to 287, and 313 to 315; these read GLPNVGKS, FTTLT, DIPG, NKTD, and SAA. Mg(2+) is bound by residues Ser-173 and Thr-193.

The protein belongs to the TRAFAC class OBG-HflX-like GTPase superfamily. OBG GTPase family. Monomer. Mg(2+) is required as a cofactor.

It is found in the cytoplasm. An essential GTPase which binds GTP, GDP and possibly (p)ppGpp with moderate affinity, with high nucleotide exchange rates and a fairly low GTP hydrolysis rate. Plays a role in control of the cell cycle, stress response, ribosome biogenesis and in those bacteria that undergo differentiation, in morphogenesis control. This Syntrophus aciditrophicus (strain SB) protein is GTPase Obg.